The chain runs to 285 residues: HTH-type transcriptional regulator MurR (285 aa).

Residues 1-77 enclose the HTH rpiR-type domain; sequence MLYLTKISNA…MALIGEYSAS (77 aa). The segment at residues 37–56 is a DNA-binding region (H-T-H motif); sequence SRQMAKQLGISQSSIVKFAQ. The 141-residue stretch at 128–268 folds into the SIS domain; that stretch reads IIEVISKAPF…FVGLVQLNDV (141 aa).

Homotetramer.

The protein operates within amino-sugar metabolism; N-acetylmuramate degradation [regulation]. In terms of biological role, represses the expression of the murPQ operon involved in the uptake and degradation of N-acetylmuramic acid (MurNAc). Binds to two adjacent inverted repeats within the operator region. MurNAc 6-phosphate, the substrate of MurQ, is the specific inducer that weakens binding of MurR to the operator. The polypeptide is HTH-type transcriptional regulator MurR (Escherichia coli (strain K12 / MC4100 / BW2952)).